The primary structure comprises 298 residues: MESLMIQGAACRCQQFLALCKLRVVSLIVFTAVIGMFLAVPAWPSWTTIWAGTLGIGLVASAAAAFNCLIEQKIDAVMARTRARPLPRGELTGTQTLVFAGVLGGSGLLLLHTVVNPLTMWLTLATFVGYAVIYTVLLKPATPQNIVIGGASGAMPPVLGWAAATGEIHHDALLLFLIIFAWTPPHFWALALYRREEYARAGLPMLPVTHGEAYTRLHVLLYTLLLLAVSLLPVGTGMAGALYLVGAVLLGARFIQYGWALHREYSDALARRTFRYSIWYLAALFAIMLLDHYFPIPV.

8 consecutive transmembrane segments (helical) span residues 24–44 (VVSL…PAWP), 46–66 (WTTI…AAAF), 97–117 (LVFA…VVNP), 118–138 (LTMW…TVLL), 146–166 (IVIG…AATG), 172–192 (ALLL…ALAL), 231–251 (LLPV…VLLG), and 278–298 (IWYL…PIPV).

It belongs to the UbiA prenyltransferase family. Protoheme IX farnesyltransferase subfamily.

It localises to the cell inner membrane. The enzyme catalyses heme b + (2E,6E)-farnesyl diphosphate + H2O = Fe(II)-heme o + diphosphate. It functions in the pathway porphyrin-containing compound metabolism; heme O biosynthesis; heme O from protoheme: step 1/1. Converts heme B (protoheme IX) to heme O by substitution of the vinyl group on carbon 2 of heme B porphyrin ring with a hydroxyethyl farnesyl side group. This is Protoheme IX farnesyltransferase from Thiobacillus denitrificans (strain ATCC 25259 / T1).